Reading from the N-terminus, the 508-residue chain is Photosystem II CP47 reaction center protein (508 aa).

6 helical membrane-spanning segments follow: residues 21–36 (SVHL…WAGS), 101–115 (IILS…IWHW), 140–156 (GVHL…FGVF), 203–218 (IAAG…FHVL), 237–252 (VLSS…AFVV), and 457–472 (SFAL…HGAR).

Belongs to the PsbB/PsbC family. PsbB subfamily. PSII is composed of 1 copy each of membrane proteins PsbA, PsbB, PsbC, PsbD, PsbE, PsbF, PsbH, PsbI, PsbJ, PsbK, PsbL, PsbM, PsbT, PsbY, PsbZ, Psb30/Ycf12, at least 3 peripheral proteins of the oxygen-evolving complex and a large number of cofactors. It forms dimeric complexes. Binds multiple chlorophylls. PSII binds additional chlorophylls, carotenoids and specific lipids. serves as cofactor.

The protein localises to the plastid. The protein resides in the chloroplast thylakoid membrane. In terms of biological role, one of the components of the core complex of photosystem II (PSII). It binds chlorophyll and helps catalyze the primary light-induced photochemical processes of PSII. PSII is a light-driven water:plastoquinone oxidoreductase, using light energy to abstract electrons from H(2)O, generating O(2) and a proton gradient subsequently used for ATP formation. The polypeptide is Photosystem II CP47 reaction center protein (Euglena gracilis).